Here is a 466-residue protein sequence, read N- to C-terminus: 3-isopropylmalate dehydratase large subunit (466 aa).

C347, C407, and C410 together coordinate [4Fe-4S] cluster.

It belongs to the aconitase/IPM isomerase family. LeuC type 1 subfamily. As to quaternary structure, heterodimer of LeuC and LeuD. Requires [4Fe-4S] cluster as cofactor.

It carries out the reaction (2R,3S)-3-isopropylmalate = (2S)-2-isopropylmalate. Its pathway is amino-acid biosynthesis; L-leucine biosynthesis; L-leucine from 3-methyl-2-oxobutanoate: step 2/4. Functionally, catalyzes the isomerization between 2-isopropylmalate and 3-isopropylmalate, via the formation of 2-isopropylmaleate. This is 3-isopropylmalate dehydratase large subunit from Vibrio campbellii (strain ATCC BAA-1116).